We begin with the raw amino-acid sequence, 353 residues long: Interferon-stimulated 20 kDa exonuclease-like 2 (353 aa).

Disordered stretches follow at residues 1-93 (MSTL…QPLD) and 125-172 (ALPK…SGAS). Over residues 14-23 (PPKKALEGNA) the composition is skewed to basic and acidic residues. Residues 24–35 (KHRNFVKKRRLL) are compositionally biased toward basic residues. The span at 54 to 63 (LHSEPSKKGE) shows a compositional bias: basic and acidic residues. Over residues 135–151 (RSQKKSSQKKSSKKNHP) the composition is skewed to basic residues. Positions 152–172 (QKNAPQNSTQAHSENKCSGAS) are enriched in polar residues. The region spanning 178 to 353 (KMVAIDCEMV…EHLARNPPTD (176 aa)) is the Exonuclease domain.

It localises to the nucleus. The protein localises to the nucleolus. Functionally, 3'-&gt; 5'-exoribonuclease involved in ribosome biogenesis in the processing of the 12S pre-rRNA. Displays a strong specificity for a 3'-end containing a free hydroxyl group. The polypeptide is Interferon-stimulated 20 kDa exonuclease-like 2 (ISG20L2) (Homo sapiens (Human)).